The sequence spans 303 residues: Glycine--tRNA ligase alpha subunit (303 aa).

The protein belongs to the class-II aminoacyl-tRNA synthetase family. In terms of assembly, tetramer of two alpha and two beta subunits.

The protein resides in the cytoplasm. It catalyses the reaction tRNA(Gly) + glycine + ATP = glycyl-tRNA(Gly) + AMP + diphosphate. In Salmonella paratyphi A (strain ATCC 9150 / SARB42), this protein is Glycine--tRNA ligase alpha subunit.